Reading from the N-terminus, the 349-residue chain is N-formyl peptide receptor 3 (349 aa).

Topologically, residues 1–27 (METNFSIPLNETEEVLPEPAGHTVLWI) are extracellular. N-linked (GlcNAc...) asparagine glycans are attached at residues N4 and N10. The helical transmembrane segment at 28 to 50 (FSLLVHGVTFIFGVLGNGLVIWV) threads the bilayer. At 51–61 (AGFRMTRTVNT) the chain is on the cytoplasmic side. The chain crosses the membrane as a helical span at residues 62 to 83 (ICYLNLALADFSFSAILPFHMV). Over 84–100 (SVAMREKWPFGTFLCKL) the chain is Extracellular. C98 and C176 are oxidised to a cystine. Residues 101–121 (VHVMIDINLFVSVYLITIIAL) traverse the membrane as a helical segment. At 122–140 (DRCICVLHPAWAQNHRTMS) the chain is on the cytoplasmic side. A helical membrane pass occupies residues 141 to 162 (LAKRVMTGLWILTIVLTLPNFI). Residues 163 to 205 (FWTTISTTNGDTYCIFNYPFWGDTVVERMNVFITMAKVSLILH) lie on the Extracellular side of the membrane. The helical transmembrane segment at 206–226 (FIIGFSIPMSIITVCYGIIVA) threads the bilayer. The Cytoplasmic segment spans residues 227-242 (KIHKKRMTKSSRPLHI). The helical transmembrane segment at 243-266 (FTAVVASFFICWFPYELTGILMAV) threads the bilayer. Over 267–286 (WLKEILLNGKYKIILVLINP) the chain is Extracellular. Residues 287–306 (TSSLAFFNSCLNPSLYVFMG) traverse the membrane as a helical segment. The Cytoplasmic portion of the chain corresponds to 307–349 (HNFQERLIRSLPTSLERALTEVPDSAQTSNTHTTSASPPEETE). The interval 327–349 (EVPDSAQTSNTHTTSASPPEETE) is disordered. The span at 331–343 (SAQTSNTHTTSAS) shows a compositional bias: polar residues.

It belongs to the G-protein coupled receptor 1 family.

The protein localises to the cell membrane. Low affinity receptor for N-formyl-methionyl peptides, which are powerful neutrophils chemotactic factors. Binding of FMLP to the receptor causes activation of neutrophils. This response is mediated via a G-protein that activates a phosphatidylinositol-calcium second messenger system. In Macaca mulatta (Rhesus macaque), this protein is N-formyl peptide receptor 3 (FPR3).